The sequence spans 155 residues: 6,7-dimethyl-8-ribityllumazine synthase (155 aa).

5-amino-6-(D-ribitylamino)uracil contacts are provided by residues Trp-22, 56–58 (SFE), and 80–82 (AVI). Position 85–86 (85–86 (AT)) interacts with (2S)-2-hydroxy-3-oxobutyl phosphate. The active-site Proton donor is His-88. Phe-113 is a 5-amino-6-(D-ribitylamino)uracil binding site. Arg-127 contributes to the (2S)-2-hydroxy-3-oxobutyl phosphate binding site.

The protein belongs to the DMRL synthase family.

It carries out the reaction (2S)-2-hydroxy-3-oxobutyl phosphate + 5-amino-6-(D-ribitylamino)uracil = 6,7-dimethyl-8-(1-D-ribityl)lumazine + phosphate + 2 H2O + H(+). It functions in the pathway cofactor biosynthesis; riboflavin biosynthesis; riboflavin from 2-hydroxy-3-oxobutyl phosphate and 5-amino-6-(D-ribitylamino)uracil: step 1/2. Catalyzes the formation of 6,7-dimethyl-8-ribityllumazine by condensation of 5-amino-6-(D-ribitylamino)uracil with 3,4-dihydroxy-2-butanone 4-phosphate. This is the penultimate step in the biosynthesis of riboflavin. The protein is 6,7-dimethyl-8-ribityllumazine synthase of Chloroflexus aurantiacus (strain ATCC 29364 / DSM 637 / Y-400-fl).